Reading from the N-terminus, the 78-residue chain is Large ribosomal subunit protein bL28 (78 aa).

Positions 1–21 (MSKVCQVTGKRPITGHNVSHA) are disordered.

This sequence belongs to the bacterial ribosomal protein bL28 family.

This Cellvibrio japonicus (strain Ueda107) (Pseudomonas fluorescens subsp. cellulosa) protein is Large ribosomal subunit protein bL28.